The sequence spans 323 residues: Lipoyl synthase (323 aa).

[4Fe-4S] cluster contacts are provided by cysteine 61, cysteine 66, cysteine 72, cysteine 87, cysteine 91, cysteine 94, and serine 303. One can recognise a Radical SAM core domain in the interval tryptophan 73–proline 292.

The protein belongs to the radical SAM superfamily. Lipoyl synthase family. [4Fe-4S] cluster is required as a cofactor.

Its subcellular location is the cytoplasm. The enzyme catalyses [[Fe-S] cluster scaffold protein carrying a second [4Fe-4S](2+) cluster] + N(6)-octanoyl-L-lysyl-[protein] + 2 oxidized [2Fe-2S]-[ferredoxin] + 2 S-adenosyl-L-methionine + 4 H(+) = [[Fe-S] cluster scaffold protein] + N(6)-[(R)-dihydrolipoyl]-L-lysyl-[protein] + 4 Fe(3+) + 2 hydrogen sulfide + 2 5'-deoxyadenosine + 2 L-methionine + 2 reduced [2Fe-2S]-[ferredoxin]. Its pathway is protein modification; protein lipoylation via endogenous pathway; protein N(6)-(lipoyl)lysine from octanoyl-[acyl-carrier-protein]: step 2/2. In terms of biological role, catalyzes the radical-mediated insertion of two sulfur atoms into the C-6 and C-8 positions of the octanoyl moiety bound to the lipoyl domains of lipoate-dependent enzymes, thereby converting the octanoylated domains into lipoylated derivatives. This Protochlamydia amoebophila (strain UWE25) protein is Lipoyl synthase.